The primary structure comprises 504 residues: Lysine--tRNA ligase (504 aa).

The Mg(2+) site is built by E411 and E418.

Belongs to the class-II aminoacyl-tRNA synthetase family. In terms of assembly, homodimer. Requires Mg(2+) as cofactor.

Its subcellular location is the cytoplasm. It carries out the reaction tRNA(Lys) + L-lysine + ATP = L-lysyl-tRNA(Lys) + AMP + diphosphate. This Clostridium botulinum (strain ATCC 19397 / Type A) protein is Lysine--tRNA ligase.